The following is an 87-amino-acid chain: UPF0250 protein ETA_23570 (87 aa).

This sequence belongs to the UPF0250 family.

This is UPF0250 protein ETA_23570 from Erwinia tasmaniensis (strain DSM 17950 / CFBP 7177 / CIP 109463 / NCPPB 4357 / Et1/99).